The primary structure comprises 424 residues: Carbohydrate sulfotransferase 8 (424 aa).

The Cytoplasmic segment spans residues 1–10 (MTLRPGTMRL). Residues 11-31 (ACMFSSILLFGAAGLLLFISL) traverse the membrane as a helical; Signal-anchor for type II membrane protein segment. Topologically, residues 32 to 424 (QDPTELAPQQ…NYSKPFADLY (393 aa)) are lumenal. Positions 47–107 (FNIRPRQPHH…PLQRGTRLRL (61 aa)) are disordered. Basic and acidic residues predominate over residues 66–77 (GDLKEPTERVTR). The N-linked (GlcNAc...) asparagine glycan is linked to Asn-128. 3'-phosphoadenylyl sulfate-binding positions include 198–204 (PKAGCSN) and 258–266 (REPFERLVS). 3 N-linked (GlcNAc...) asparagine glycosylation sites follow: Asn-294, Asn-367, and Asn-415.

It belongs to the sulfotransferase 2 family. Predominantly expressed in pituitary gland. In brain, it is expressed in pituitary gland, cerebellum, medulla oblongata, pons, thalamus and spinal cord. Expressed in the epidermis. Expressed at lower level in lung, spleen, adrenal gland, placenta, prostate, testis, mammary gland and trachea.

Its subcellular location is the golgi apparatus membrane. Catalyzes the transfer of sulfate to position 4 of non-reducing N-acetylgalactosamine (GalNAc) residues in both N-glycans and O-glycans. Required for biosynthesis of glycoprotein hormones lutropin and thyrotropin, by mediating sulfation of their carbohydrate structures. Only active against terminal GalNAcbeta1,GalNAcbeta. Not active toward chondroitin. This Homo sapiens (Human) protein is Carbohydrate sulfotransferase 8 (CHST8).